Here is a 426-residue protein sequence, read N- to C-terminus: DNA polymerase processivity factor component OPG148 (426 aa).

This sequence belongs to the orthopoxvirus OPG148 family. In terms of assembly, interacts with the DNA polymerase catalytic subunit OPG071. Interacts with UDG/OPG116. Component of the uracil-DNA glycosylase(UDG)-OPG148-polymerase complex; OPG148 and UDG form a heterodimeric processivity factor that associates with OPG071 to form the processive polymerase holoenzyme. Interacts with OPG117.

In terms of biological role, plays an essential role in viral DNA replication by acting as the polymerase processivity factor together with protein OPG116. Serves as a bridge which links the DNA polymerase OPG071 and the uracil DNA glycosylase. This Vaccinia virus (strain Copenhagen) (VACV) protein is DNA polymerase processivity factor component OPG148 (OPG148).